Here is a 400-residue protein sequence, read N- to C-terminus: tRNA(Met) cytidine acetate ligase (400 aa).

ATP contacts are provided by residues Ile7 to His20, Gly101, Asn162, and Arg187.

This sequence belongs to the TmcAL family.

The protein resides in the cytoplasm. It carries out the reaction cytidine(34) in elongator tRNA(Met) + acetate + ATP = N(4)-acetylcytidine(34) in elongator tRNA(Met) + AMP + diphosphate. Its function is as follows. Catalyzes the formation of N(4)-acetylcytidine (ac(4)C) at the wobble position of elongator tRNA(Met), using acetate and ATP as substrates. First activates an acetate ion to form acetyladenylate (Ac-AMP) and then transfers the acetyl group to tRNA to form ac(4)C34. This chain is tRNA(Met) cytidine acetate ligase, found in Oceanobacillus iheyensis (strain DSM 14371 / CIP 107618 / JCM 11309 / KCTC 3954 / HTE831).